A 226-amino-acid polypeptide reads, in one-letter code: Leucyl/phenylalanyl-tRNA--protein transferase (226 aa).

The protein belongs to the L/F-transferase family.

The protein localises to the cytoplasm. The catalysed reaction is N-terminal L-lysyl-[protein] + L-leucyl-tRNA(Leu) = N-terminal L-leucyl-L-lysyl-[protein] + tRNA(Leu) + H(+). It carries out the reaction N-terminal L-arginyl-[protein] + L-leucyl-tRNA(Leu) = N-terminal L-leucyl-L-arginyl-[protein] + tRNA(Leu) + H(+). It catalyses the reaction L-phenylalanyl-tRNA(Phe) + an N-terminal L-alpha-aminoacyl-[protein] = an N-terminal L-phenylalanyl-L-alpha-aminoacyl-[protein] + tRNA(Phe). Functions in the N-end rule pathway of protein degradation where it conjugates Leu, Phe and, less efficiently, Met from aminoacyl-tRNAs to the N-termini of proteins containing an N-terminal arginine or lysine. In Azotobacter vinelandii (strain DJ / ATCC BAA-1303), this protein is Leucyl/phenylalanyl-tRNA--protein transferase.